Reading from the N-terminus, the 151-residue chain is Neuroglobin (151 aa).

The Globin domain maps to 1–149 (MERPESELIR…VVQAMSRGWD (149 aa)). The heme b site is built by His64 and His96.

The protein belongs to the globin family. As to quaternary structure, monomer. Homodimer and homotetramer; disulfide-linked. Mainly monomeric but also detected as part of homodimers and homotetramers. Interacts with 14-3-3 proteins; regulates the phosphorylation of NGB. Could interact (ferrous form) with G-alpha(i) proteins (GTP-bound form). In terms of processing, phosphorylated during hypoxia by ERK1/ERK2. Phosphorylation regulates the heme pocket hexacoordination preventing the association of His-64 with the heme metal center. Thereby, promotes the access of dioxygen and nitrite to the heme and stimulates the nitrite reductase activity. Phosphorylation during hypoxia is stabilized by 14-3-3 proteins. In terms of tissue distribution, widely distributed throughout the adult brain, including cerebral cortex, hippocampus, thalamus, hypothalamus, olfactory bulb, and cerebellum.

Its subcellular location is the cytoplasm. It is found in the cytosol. It localises to the mitochondrion matrix. The catalysed reaction is Fe(III)-heme b-[protein] + nitric oxide + H2O = Fe(II)-heme b-[protein] + nitrite + 2 H(+). In terms of biological role, monomeric globin with a bis-histidyl six-coordinate heme-iron atom through which it can bind dioxygen, carbon monoxide and nitric oxide. Could help transport oxygen and increase its availability to the metabolically active neuronal tissues, though its low quantity in tissues as well as its high affinity for dioxygen, which may limit its oxygen-releasing ability, argue against it. The ferrous/deoxygenated form exhibits a nitrite reductase activity and it could produce nitric oxide which in turn inhibits cellular respiration in response to hypoxia. In its ferrous/deoxygenated state, it may also exhibit GDI (Guanine nucleotide Dissociation Inhibitor) activity toward heterotrimeric G-alpha proteins, thereby regulating signal transduction to facilitate neuroprotective responses in the wake of hypoxia and associated oxidative stress. This Rattus norvegicus (Rat) protein is Neuroglobin.